We begin with the raw amino-acid sequence, 222 residues long: Putative O-methyltransferase MAP_2558 (222 aa).

Residues valine 49, glutamate 71, glycine 73 to threonine 74, serine 79, aspartate 97, and isoleucine 98 contribute to the S-adenosyl-L-methionine site. Aspartate 145 provides a ligand contact to substrate. Aspartate 147 is an S-adenosyl-L-methionine binding site.

It belongs to the class I-like SAM-binding methyltransferase superfamily. Cation-dependent O-methyltransferase family.

This is Putative O-methyltransferase MAP_2558 from Mycolicibacterium paratuberculosis (strain ATCC BAA-968 / K-10) (Mycobacterium paratuberculosis).